Consider the following 248-residue polypeptide: Sulfur carrier protein FdhD (248 aa).

Catalysis depends on C99, which acts as the Cysteine persulfide intermediate. A Mo-bis(molybdopterin guanine dinucleotide)-binding site is contributed by 232–237 (FVRGKR).

The protein belongs to the FdhD family.

It localises to the cytoplasm. Its function is as follows. Required for formate dehydrogenase (FDH) activity. Acts as a sulfur carrier protein that transfers sulfur from IscS to the molybdenum cofactor prior to its insertion into FDH. The sequence is that of Sulfur carrier protein FdhD from Methanothermobacter thermautotrophicus (strain ATCC 29096 / DSM 1053 / JCM 10044 / NBRC 100330 / Delta H) (Methanobacterium thermoautotrophicum).